Reading from the N-terminus, the 344-residue chain is GTP 3',8-cyclase (344 aa).

Residues 19-245 (PFGRAVTYLR…DIPYRTGGPA (227 aa)) form the Radical SAM core domain. Arginine 28 lines the GTP pocket. Residues cysteine 35 and cysteine 39 each coordinate [4Fe-4S] cluster. An S-adenosyl-L-methionine-binding site is contributed by tyrosine 41. Cysteine 42 lines the [4Fe-4S] cluster pocket. Position 77 (arginine 77) interacts with GTP. Residue glycine 81 participates in S-adenosyl-L-methionine binding. GTP is bound at residue threonine 111. Serine 135 lines the S-adenosyl-L-methionine pocket. Lysine 171 is a binding site for GTP. Residue methionine 205 participates in S-adenosyl-L-methionine binding. Residues cysteine 268 and cysteine 271 each coordinate [4Fe-4S] cluster. 273–275 (RVR) is a GTP binding site. Cysteine 285 is a [4Fe-4S] cluster binding site.

Belongs to the radical SAM superfamily. MoaA family. In terms of assembly, monomer and homodimer. Requires [4Fe-4S] cluster as cofactor.

The catalysed reaction is GTP + AH2 + S-adenosyl-L-methionine = (8S)-3',8-cyclo-7,8-dihydroguanosine 5'-triphosphate + 5'-deoxyadenosine + L-methionine + A + H(+). It functions in the pathway cofactor biosynthesis; molybdopterin biosynthesis. In terms of biological role, catalyzes the cyclization of GTP to (8S)-3',8-cyclo-7,8-dihydroguanosine 5'-triphosphate. In Brucella canis (strain ATCC 23365 / NCTC 10854 / RM-666), this protein is GTP 3',8-cyclase.